The primary structure comprises 110 residues: Cytochrome subunit of sulfide dehydrogenase (110 aa).

Residues 1 to 16 (MLAAAPLLLASGNGFA) form the signal peptide. The heme c site is built by C41, C44, H45, and M83.

Dimer of one cytochrome and one flavoprotein. In terms of processing, binds 1 heme c group covalently per subunit.

The protein localises to the periplasm. Functionally, monoheme cytochrome that function as the electron transport subunit of sulfide dehydrogenase. The chain is Cytochrome subunit of sulfide dehydrogenase (fccA) from Chlorobaculum tepidum (strain ATCC 49652 / DSM 12025 / NBRC 103806 / TLS) (Chlorobium tepidum).